Reading from the N-terminus, the 156-residue chain is Small ribosomal subunit protein uS7 (156 aa).

Belongs to the universal ribosomal protein uS7 family. Part of the 30S ribosomal subunit. Contacts proteins S9 and S11.

Its function is as follows. One of the primary rRNA binding proteins, it binds directly to 16S rRNA where it nucleates assembly of the head domain of the 30S subunit. Is located at the subunit interface close to the decoding center, probably blocks exit of the E-site tRNA. This chain is Small ribosomal subunit protein uS7, found in Pseudomonas fluorescens (strain ATCC BAA-477 / NRRL B-23932 / Pf-5).